The primary structure comprises 568 residues: Involucrin (568 aa).

2 disordered regions span residues 23–499 (CSPA…EKEL) and 517–568 (RKKH…HEVQ). The segment covering 25–36 (PAQTQQEQTKQP) has biased composition (low complexity). Residues 49 to 77 (TQEKGFPKHEEKEANPVKDLPEQESEHHQ) show a composition bias toward basic and acidic residues. Low complexity predominate over residues 78–88 (QPGPQKQQLQV). Positions 89–106 (KKPEQELQEQELHSEKQP) are enriched in basic and acidic residues. 3 stretches are compositionally biased toward low complexity: residues 107–121 (QEPQ…QQQR), 133–154 (HQQP…QDVL), and 172–181 (PELPLGQQQK). The span at 193 to 213 (KQQKLHLVERHQEPQEQELHH) shows a compositional bias: basic and acidic residues. A compositionally biased stretch (low complexity) spans 217–232 (QKQQQPQEQELQLVQH). 2 stretches are compositionally biased toward basic and acidic residues: residues 266–333 (ESHE…HQET) and 345–456 (KPHE…HLGK). The segment covering 457 to 467 (QQEQQIEYEGY) has biased composition (low complexity). Residue Ser472 is modified to Phosphoserine. Composition is skewed to basic and acidic residues over residues 478–499 (KQEK…EKEL), 517–532 (RKKH…EKQI), and 551–568 (VKED…HEVQ).

This sequence belongs to the involucrin family. In terms of assembly, directly or indirectly cross-linked to cornifelin (CNFN). Post-translationally, substrate of transglutaminase. Specific glutamines or lysines are cross-linked to keratins, desmoplakin and to inter involucrin molecules. As to expression, keratinocytes of epidermis and other stratified squamous epithelia.

Its subcellular location is the cytoplasm. In terms of biological role, part of the insoluble cornified cell envelope (CE) of stratified squamous epithelia. The chain is Involucrin (Ivl) from Rattus norvegicus (Rat).